We begin with the raw amino-acid sequence, 171 residues long: NADH-quinone oxidoreductase subunit B (171 aa).

Residues Cys-39, Cys-40, Cys-105, and Cys-134 each coordinate [4Fe-4S] cluster.

The protein belongs to the complex I 20 kDa subunit family. In terms of assembly, NDH-1 is composed of 14 different subunits. Subunits NuoB, C, D, E, F, and G constitute the peripheral sector of the complex. Requires [4Fe-4S] cluster as cofactor.

Its subcellular location is the cell inner membrane. It catalyses the reaction a quinone + NADH + 5 H(+)(in) = a quinol + NAD(+) + 4 H(+)(out). Its function is as follows. NDH-1 shuttles electrons from NADH, via FMN and iron-sulfur (Fe-S) centers, to quinones in the respiratory chain. The immediate electron acceptor for the enzyme in this species is believed to be ubiquinone. Couples the redox reaction to proton translocation (for every two electrons transferred, four hydrogen ions are translocated across the cytoplasmic membrane), and thus conserves the redox energy in a proton gradient. The polypeptide is NADH-quinone oxidoreductase subunit B (Aliarcobacter butzleri (strain RM4018) (Arcobacter butzleri)).